A 193-amino-acid chain; its full sequence is Riboflavin kinase (193 aa).

Residues 1 to 59 (MGISQQAASQHLRELEDEGLITRNAEGKGISVMVTDKGRHELLRVYNILHDSLHSRPDH) form an H-T-H motif-like region. A riboflavin kinase region spans residues 60-193 (VEITGTLVSG…TIRIPLEQED (134 aa)). 69–74 (GMNEGA) is a binding site for CDP. 2 residues coordinate Mg(2+): Thr98 and Asn100. FMN-binding residues include Thr156 and Glu164. 169-172 (LDIR) contributes to the CDP binding site.

The protein belongs to the archaeal riboflavin kinase family. The cofactor is Mg(2+).

The enzyme catalyses riboflavin + CTP = CDP + FMN + H(+). Its pathway is cofactor biosynthesis; FMN biosynthesis; FMN from riboflavin (CTP route): step 1/1. Functionally, catalyzes the CTP-dependent phosphorylation of riboflavin (vitamin B2) to form flavin mononucleotide (FMN). In Cenarchaeum symbiosum (strain A), this protein is Riboflavin kinase (ribK).